A 285-amino-acid chain; its full sequence is Bifunctional protein FolD (285 aa).

Residues 166 to 168, serine 191, and isoleucine 232 contribute to the NADP(+) site; that span reads GAS.

The protein belongs to the tetrahydrofolate dehydrogenase/cyclohydrolase family. In terms of assembly, homodimer.

The catalysed reaction is (6R)-5,10-methylene-5,6,7,8-tetrahydrofolate + NADP(+) = (6R)-5,10-methenyltetrahydrofolate + NADPH. It catalyses the reaction (6R)-5,10-methenyltetrahydrofolate + H2O = (6R)-10-formyltetrahydrofolate + H(+). Its pathway is one-carbon metabolism; tetrahydrofolate interconversion. In terms of biological role, catalyzes the oxidation of 5,10-methylenetetrahydrofolate to 5,10-methenyltetrahydrofolate and then the hydrolysis of 5,10-methenyltetrahydrofolate to 10-formyltetrahydrofolate. In Actinobacillus pleuropneumoniae serotype 7 (strain AP76), this protein is Bifunctional protein FolD.